The chain runs to 111 residues: MNTLKKNGEFQNIYNLGNKYFGNYSLIFFNKNKLEYSRFGFIASKKVGKAFCRNRIKRLFREYIRLNINKINDNYDIIIVAKKKFGENIEDLKYKDIEKDLNRVFKNSKII.

Belongs to the RnpA family. As to quaternary structure, consists of a catalytic RNA component (M1 or rnpB) and a protein subunit.

The enzyme catalyses Endonucleolytic cleavage of RNA, removing 5'-extranucleotides from tRNA precursor.. Functionally, RNaseP catalyzes the removal of the 5'-leader sequence from pre-tRNA to produce the mature 5'-terminus. It can also cleave other RNA substrates such as 4.5S RNA. The protein component plays an auxiliary but essential role in vivo by binding to the 5'-leader sequence and broadening the substrate specificity of the ribozyme. The chain is Ribonuclease P protein component from Fusobacterium nucleatum subsp. nucleatum (strain ATCC 25586 / DSM 15643 / BCRC 10681 / CIP 101130 / JCM 8532 / KCTC 2640 / LMG 13131 / VPI 4355).